The following is a 468-amino-acid chain: Ribulose bisphosphate carboxylase large chain (468 aa).

At Lys-5 the chain carries N6,N6,N6-trimethyllysine. Positions 114 and 164 each coordinate substrate. Lys-166 serves as the catalytic Proton acceptor. Lys-168 contacts substrate. 3 residues coordinate Mg(2+): Lys-192, Asp-194, and Glu-195. Residue Lys-192 is modified to N6-carboxylysine. Catalysis depends on His-285, which acts as the Proton acceptor. Residues Arg-286, His-318, and Ser-370 each contribute to the substrate site.

It belongs to the RuBisCO large chain family. Type I subfamily. In terms of assembly, heterohexadecamer of 8 large chains and 8 small chains; disulfide-linked. The disulfide link is formed within the large subunit homodimers. It depends on Mg(2+) as a cofactor. The disulfide bond which can form in the large chain dimeric partners within the hexadecamer appears to be associated with oxidative stress and protein turnover.

It localises to the plastid. It is found in the chloroplast. The catalysed reaction is 2 (2R)-3-phosphoglycerate + 2 H(+) = D-ribulose 1,5-bisphosphate + CO2 + H2O. It carries out the reaction D-ribulose 1,5-bisphosphate + O2 = 2-phosphoglycolate + (2R)-3-phosphoglycerate + 2 H(+). Functionally, ruBisCO catalyzes two reactions: the carboxylation of D-ribulose 1,5-bisphosphate, the primary event in carbon dioxide fixation, as well as the oxidative fragmentation of the pentose substrate in the photorespiration process. Both reactions occur simultaneously and in competition at the same active site. The polypeptide is Ribulose bisphosphate carboxylase large chain (Solandra grandiflora (Chalice vine)).